Reading from the N-terminus, the 506-residue chain is Glutamate--tRNA ligase (506 aa).

A 'HIGH' region motif is present at residues 21-31 (PSPTGTPHVGM). Residues 265-269 (KLSKR) carry the 'KMSKS' region motif. Residue Lys268 participates in ATP binding.

This sequence belongs to the class-I aminoacyl-tRNA synthetase family. Glutamate--tRNA ligase type 1 subfamily. As to quaternary structure, monomer.

The protein localises to the cytoplasm. It catalyses the reaction tRNA(Glu) + L-glutamate + ATP = L-glutamyl-tRNA(Glu) + AMP + diphosphate. Functionally, catalyzes the attachment of glutamate to tRNA(Glu) in a two-step reaction: glutamate is first activated by ATP to form Glu-AMP and then transferred to the acceptor end of tRNA(Glu). This is Glutamate--tRNA ligase from Bifidobacterium longum (strain DJO10A).